Here is a 275-residue protein sequence, read N- to C-terminus: NAD kinase (275 aa).

Catalysis depends on aspartate 53, which acts as the Proton acceptor. Residues 53–54 (DG), 129–130 (NE), arginine 155, aspartate 157, and 168–173 (TAYNKS) contribute to the NAD(+) site.

Belongs to the NAD kinase family. A divalent metal cation serves as cofactor.

It localises to the cytoplasm. It carries out the reaction NAD(+) + ATP = ADP + NADP(+) + H(+). In terms of biological role, involved in the regulation of the intracellular balance of NAD and NADP, and is a key enzyme in the biosynthesis of NADP. Catalyzes specifically the phosphorylation on 2'-hydroxyl of the adenosine moiety of NAD to yield NADP. This is NAD kinase from Streptococcus agalactiae serotype Ia (strain ATCC 27591 / A909 / CDC SS700).